Reading from the N-terminus, the 383-residue chain is Homeobox protein knotted-1-like 5 (383 aa).

Disordered stretches follow at residues 1 to 35 (MSFN…HFSE) and 52 to 73 (TTAD…ADTN). Positions 281–301 (ELKHELKQGFKEKIVDIREEI) constitute an ELK domain. The segment at residues 302-365 (MRKRRAGKLP…NQRKRNWNSN (64 aa)) is a DNA-binding region (homeobox; TALE-type). The tract at residues 361–383 (NWNSNSSTSSTLTKNKRKRTGKS) is disordered. Low complexity predominate over residues 362 to 373 (WNSNSSTSSTLT). Positions 374 to 383 (KNKRKRTGKS) are enriched in basic residues.

This sequence belongs to the TALE/KNOX homeobox family. In terms of assembly, may form heterodimeric complex with the TALE/BELL protein BEL1, BLH1 and BLH2. Interacts with OFP1, OFP2, OFP3 and OFP4.

It is found in the nucleus. This chain is Homeobox protein knotted-1-like 5 (KNAT5), found in Arabidopsis thaliana (Mouse-ear cress).